A 40-amino-acid polypeptide reads, in one-letter code: Large ribosomal subunit protein bL36B (40 aa).

This sequence belongs to the bacterial ribosomal protein bL36 family.

The protein is Large ribosomal subunit protein bL36B of Streptomyces coelicolor (strain ATCC BAA-471 / A3(2) / M145).